Here is a 412-residue protein sequence, read N- to C-terminus: Mannose-6-phosphate isomerase (412 aa).

Residues Q99, H101, E126, and H265 each coordinate Zn(2+). The active site involves R284.

The protein belongs to the mannose-6-phosphate isomerase type 1 family. Zn(2+) serves as cofactor.

The protein resides in the cytoplasm. It is found in the nucleus. The enzyme catalyses D-mannose 6-phosphate = D-fructose 6-phosphate. The protein operates within nucleotide-sugar biosynthesis; GDP-alpha-D-mannose biosynthesis; alpha-D-mannose 1-phosphate from D-fructose 6-phosphate: step 1/2. Functionally, involved in the synthesis of the GDP-mannose and dolichol-phosphate-mannose required for a number of critical mannosyl transfer reactions. This is Mannose-6-phosphate isomerase (pmi40) from Schizosaccharomyces pombe (strain 972 / ATCC 24843) (Fission yeast).